We begin with the raw amino-acid sequence, 138 residues long: Basic phospholipase A2 Sct-N6 (138 aa).

A signal peptide spans 1 to 16 (MRTFWIVAVLLVGVEG). Disulfide bonds link cysteine 42–cysteine 131, cysteine 44–cysteine 60, cysteine 59–cysteine 111, cysteine 65–cysteine 138, cysteine 66–cysteine 104, cysteine 73–cysteine 97, and cysteine 91–cysteine 102. Residues tyrosine 43, glycine 45, and glycine 47 each coordinate Ca(2+). Histidine 63 is a catalytic residue. Residue aspartate 64 coordinates Ca(2+). Aspartate 105 is an active-site residue.

It belongs to the phospholipase A2 family. Group II subfamily. D49 sub-subfamily. Requires Ca(2+) as cofactor. In terms of tissue distribution, expressed by the venom gland.

The protein localises to the secreted. It carries out the reaction a 1,2-diacyl-sn-glycero-3-phosphocholine + H2O = a 1-acyl-sn-glycero-3-phosphocholine + a fatty acid + H(+). In terms of biological role, snake venom phospholipase A2 (PLA2) that displays edema-inducing activities, as well as presynaptic neurotoxicity and low myotoxicity. PLA2 catalyzes the calcium-dependent hydrolysis of the 2-acyl groups in 3-sn-phosphoglycerides. The chain is Basic phospholipase A2 Sct-N6 from Sistrurus tergeminus (Western massasauga).